Here is a 318-residue protein sequence, read N- to C-terminus: ZAR1-like protein (318 aa).

A disordered region spans residues 149-211 (LSDPPEAGQP…PVDSSQPLGR (63 aa)). The segment covering 155-169 (AGQPPPPLPPPSPPP) has biased composition (pro residues). The segment at 219–304 (PKYGYFHCKD…QELCGRCKDK (86 aa)) adopts a 3CxxC-type zinc-finger fold.

It belongs to the ZAR1 family. As to quaternary structure, interacts with YBX2.

Its subcellular location is the cytoplasm. The protein resides in the cytoplasmic ribonucleoprotein granule. MRNA-binding protein required for maternal mRNA storage, translation and degradation during oocyte maturation. Probably promotes formation of some phase-separated membraneless compartment that stores maternal mRNAs in oocytes: acts by undergoing liquid-liquid phase separation upon binding to maternal mRNAs. Binds to the 3'-UTR of maternal mRNAs, inhibiting their translation. The chain is ZAR1-like protein (ZAR1L) from Bos taurus (Bovine).